The following is a 188-amino-acid chain: UPF0397 protein LACR_0367 (188 aa).

The next 5 membrane-spanning stretches (helical) occupy residues 14–34, 48–68, 80–100, 120–140, and 152–172; these read IVVATGIGAALFVIIGWLINI, AVLALFSALFGPLAGFLIGFI, APWWTWVLGSGLMGLFLGFGV, IVQFLANVVVWGLIAPIGDIL, and QGVVAGLVNALTIAVAGTLLL.

The protein belongs to the UPF0397 family.

Its subcellular location is the cell membrane. The chain is UPF0397 protein LACR_0367 from Lactococcus lactis subsp. cremoris (strain SK11).